We begin with the raw amino-acid sequence, 289 residues long: Trimeric intracellular cation channel type B (289 aa).

The Lumenal segment spans residues 1-18; it reads MDVFAFFNLNELAFGLSK. A helical transmembrane segment spans residues 19 to 36; it reads LPMFPYFDMAHYIISVMS. Over 37 to 49 the chain is Cytoplasmic; that stretch reads LREQPGALCVSQR. Residues 50 to 73 traverse the membrane as a helical segment; it reads SPLACWFSSMLYCFGGAVLSALML. Topologically, residues 74-85 are lumenal; sequence ADAPVAPLSNTT. The helical transmembrane segment at 86–103 threads the bilayer; sequence NLLLATLMWYLVFYCPLD. At 104–107 the chain is on the cytoplasmic side; that stretch reads VVYS. The helical transmembrane segment at 108-125 threads the bilayer; that stretch reads LASLLPLRLVLTAMKEVT. A 1,2-diacyl-sn-glycero-3-phospho-(1D-myo-inositol-4,5-bisphosphate)-binding residues include K122 and R126. Over 126 to 144 the chain is Lumenal; that stretch reads RTWKVLSGVSQAGSKYSDA. The helical transmembrane segment at 145 to 162 threads the bilayer; the sequence is LFVMVAVGWAKGAGGGLI. The Cytoplasmic portion of the chain corresponds to 163–183; that stretch reads SNFEQLVRGVWKPETNELLKM. The helical transmembrane segment at 184 to 201 threads the bilayer; the sequence is SYPTKVTLLGAVVFSLQQ. Over 202–210 the chain is Lumenal; that stretch reads CRYLPIQTH. A helical membrane pass occupies residues 211-230; sequence HLTFIYTLFTVTNKTRMMLL. The Cytoplasmic segment spans residues 231–289; sequence GSSSHPLSSLESFLYKTLFVRPLTDLSAEHTHSKHNGSVPEPTTAQTHTKEAEASKKTN. The disordered stretch occupies residues 260-289; it reads HTHSKHNGSVPEPTTAQTHTKEAEASKKTN. Residues 278–289 are compositionally biased toward basic and acidic residues; the sequence is HTKEAEASKKTN.

This sequence belongs to the TMEM38 family. As to quaternary structure, homotrimer; conformation seems to be controled by binding to diacylglycerol (DAG).

The protein localises to the endoplasmic reticulum membrane. It catalyses the reaction K(+)(in) = K(+)(out). Channel activity is activated by increased cytosolic Ca(2+) levels and blocked by luminal high Ca(2+) levels. Functionally, intracellular monovalent cation channel required for maintenance of rapid intracellular calcium release. Acts as a potassium counter-ion channel that functions in synchronization with calcium release from intracellular stores. Activated by increased cytosolic Ca(2+) levels. The sequence is that of Trimeric intracellular cation channel type B (tmem38b) from Danio rerio (Zebrafish).